The chain runs to 870 residues: Eukaryotic translation initiation factor 3 subunit C (870 aa).

The disordered stretch occupies residues 1–92 (MSRFFRGDSS…GVKVVKSAKN (92 aa)). The span at 14 to 54 (SSDEEEDLYSDDEEVQEQPEEESEEDDSEEDDDDDDSDSSS) shows a compositional bias: acidic residues. Positions 608-782 (FHMHINLELL…SSIIFRKGVE (175 aa)) constitute a PCI domain. Positions 807 to 870 (TLETRTQGTA…ALGAAVGSRA (64 aa)) are disordered. Residues 824 to 844 (GRGGRGGNRGGRGGNRGGRGG) show a composition bias toward gly residues.

Belongs to the eIF-3 subunit C family. In terms of assembly, component of the eukaryotic translation initiation factor 3 (eIF-3) complex.

It localises to the cytoplasm. Functionally, component of the eukaryotic translation initiation factor 3 (eIF-3) complex, which is involved in protein synthesis of a specialized repertoire of mRNAs and, together with other initiation factors, stimulates binding of mRNA and methionyl-tRNAi to the 40S ribosome. The eIF-3 complex specifically targets and initiates translation of a subset of mRNAs involved in cell proliferation. This is Eukaryotic translation initiation factor 3 subunit C (nip1) from Sclerotinia sclerotiorum (strain ATCC 18683 / 1980 / Ss-1) (White mold).